The following is a 328-amino-acid chain: Malate dehydrogenase (328 aa).

11–17 (GAAGQIG) provides a ligand contact to NAD(+). Substrate contacts are provided by Arg94 and Arg100. NAD(+)-binding positions include Asn107, Gln114, and 131–133 (VGN). 2 residues coordinate substrate: Asn133 and Arg164. Catalysis depends on His189, which acts as the Proton acceptor.

It belongs to the LDH/MDH superfamily. MDH type 2 family.

The catalysed reaction is (S)-malate + NAD(+) = oxaloacetate + NADH + H(+). Functionally, catalyzes the reversible oxidation of malate to oxaloacetate. The chain is Malate dehydrogenase from Acinetobacter baumannii (strain SDF).